Reading from the N-terminus, the 298-residue chain is Mitochondrial dicarboxylate transporter (298 aa).

3 Solcar repeats span residues 11–95, 103–195, and 205–289; these read KNIK…LKEN, TNMA…FKNY, and SKNY…LKKH. The next 6 membrane-spanning stretches (helical) occupy residues 17–37, 58–76, 105–126, 170–189, 211–231, and 265–283; these read WWYGGAAGIFATMVTHPLDLA, ILANEGVVGLYSGLSAAVL, MAYLLPCSMFSGAIGGLAGNFA, GWKPNMVRGILMTASQVVTY, LTASLLAGLVATTVCSPADVM, and WLPSFTRLGPFTMLIFFAI.

Belongs to the mitochondrial carrier (TC 2.A.29) family. As to quaternary structure, homodimer. Binds to the TIM22 translocation complex during import.

The protein resides in the mitochondrion inner membrane. Its function is as follows. Mitochondrial dicarboxylic transporter catalyzing the exchange of dicarboxylic acids like malate and succinate for inorganic phosphate. Required for growth on ethanol and acetate. This is Mitochondrial dicarboxylate transporter (DIC1) from Saccharomyces cerevisiae (strain ATCC 204508 / S288c) (Baker's yeast).